The following is a 336-amino-acid chain: UDP-3-O-acylglucosamine N-acyltransferase (336 aa).

The active-site Proton acceptor is the His233.

The protein belongs to the transferase hexapeptide repeat family. LpxD subfamily. In terms of assembly, homotrimer.

It carries out the reaction a UDP-3-O-[(3R)-3-hydroxyacyl]-alpha-D-glucosamine + a (3R)-hydroxyacyl-[ACP] = a UDP-2-N,3-O-bis[(3R)-3-hydroxyacyl]-alpha-D-glucosamine + holo-[ACP] + H(+). It participates in bacterial outer membrane biogenesis; LPS lipid A biosynthesis. In terms of biological role, catalyzes the N-acylation of UDP-3-O-acylglucosamine using 3-hydroxyacyl-ACP as the acyl donor. Is involved in the biosynthesis of lipid A, a phosphorylated glycolipid that anchors the lipopolysaccharide to the outer membrane of the cell. In Helicobacter pylori (strain J99 / ATCC 700824) (Campylobacter pylori J99), this protein is UDP-3-O-acylglucosamine N-acyltransferase.